We begin with the raw amino-acid sequence, 1624 residues long: NAD-specific glutamate dehydrogenase (1624 aa).

Lys845 is a catalytic residue.

Belongs to the Glu/Leu/Phe/Val dehydrogenases family. Interacts with (unphosphorylated) GarA.

It catalyses the reaction L-glutamate + NAD(+) + H2O = 2-oxoglutarate + NH4(+) + NADH + H(+). With respect to regulation, activity is inhibited by unphosphorylated GarA. In terms of biological role, catalyzes the reversible conversion of L-glutamate to 2-oxoglutarate. The polypeptide is NAD-specific glutamate dehydrogenase (gdh) (Mycobacterium tuberculosis (strain ATCC 25618 / H37Rv)).